The sequence spans 513 residues: ATP synthase subunit alpha 2 (513 aa).

152 to 159 (GDSKTGKT) contacts ATP.

Belongs to the ATPase alpha/beta chains family. F-type ATPases have 2 components, CF(1) - the catalytic core - and CF(0) - the membrane proton channel. CF(1) has five subunits: alpha(3), beta(3), gamma(1), delta(1), epsilon(1). CF(0) has three main subunits: a(1), b(2) and c(9-12). The alpha and beta chains form an alternating ring which encloses part of the gamma chain. CF(1) is attached to CF(0) by a central stalk formed by the gamma and epsilon chains, while a peripheral stalk is formed by the delta and b chains.

It is found in the cell membrane. The catalysed reaction is ATP + H2O + 4 H(+)(in) = ADP + phosphate + 5 H(+)(out). Its function is as follows. Produces ATP from ADP in the presence of a proton gradient across the membrane. The alpha chain is a regulatory subunit. In Mycoplasmopsis pulmonis (strain UAB CTIP) (Mycoplasma pulmonis), this protein is ATP synthase subunit alpha 2.